The chain runs to 664 residues: Sodium/glucose cotransporter 1 (664 aa).

Topologically, residues 1–24 are extracellular; it reads MDSSTWSPPATATAEPLQAYERIR. Residues 25-47 traverse the membrane as a helical segment; it reads NAADISVIVIYFVVVMAVGLWAM. At 48–66 the chain is on the cytoplasmic side; the sequence is FSTNRGTVGGFFLAGRSMV. The helical transmembrane segment at 67-90 threads the bilayer; the sequence is WWPIGASLFASNIGSGHFVGLAGT. The Extracellular portion of the chain corresponds to 91–95; that stretch reads GAAAG. The helical transmembrane segment at 96–117 threads the bilayer; sequence IATGGFEWNALILVVLLGWVFV. The Cytoplasmic segment spans residues 118-139; it reads PIYIKAGVVTMPEYLRKRFGGQ. A helical membrane pass occupies residues 140 to 169; the sequence is RIQVYLSVLSLVLYIFTKISADIFSGAIFI. Residues 170-176 lie on the Extracellular side of the membrane; sequence NLALGLD. A helical transmembrane segment spans residues 177 to 193; sequence LYLAIFILLAITALYTI. The Cytoplasmic portion of the chain corresponds to 194 to 202; that stretch reads TGGLAAVIY. The chain crosses the membrane as a helical span at residues 203 to 221; that stretch reads TDTLQTVIMLLGSFILTGF. At 222–275 the chain is on the extracellular side; it reads AFHEVGGYSAFVTKYMNAIPTVTSYGNTTVKKECYTPRADSFHIFRDPLKGDLP. N-linked (GlcNAc...) asparagine glycosylation occurs at Asn-248. Disulfide bonds link Cys-255–Cys-511, Cys-255–Cys-610, Cys-345–Cys-351, Cys-355–Cys-361, and Cys-517–Cys-522. The helical transmembrane segment at 276–295 threads the bilayer; that stretch reads WPGLIFGLTIISLWYWCTDQ. Over 296 to 309 the chain is Cytoplasmic; it reads VIVQRCLSAKNMSH. A helical membrane pass occupies residues 310–331; that stretch reads VKAGCIMCGYMKLLPMFLMVMP. At 332–375 the chain is on the extracellular side; the sequence is GMISRILFTEKVACTVPSECEKYCGTKVGCTNIAYPTLVVELMP. The chain crosses the membrane as a helical span at residues 376-406; the sequence is NGLRGLMLSVMLASLMSSLTSIFNSASTLFT. Residues 407-422 lie on the Cytoplasmic side of the membrane; that stretch reads MDIYTKIRKKASEKEL. Residues 423–444 form a helical membrane-spanning segment; sequence MIAGRLFMLVLIGVSIAWVPIV. At 445 to 451 the chain is on the extracellular side; the sequence is QSAQSGQ. A helical membrane pass occupies residues 452–477; it reads LFDYIQSITSYLGPPIAAVFLLAIFC. A D-glucose-binding site is contributed by Gln-457. The Cytoplasmic segment spans residues 478-481; the sequence is KRVN. Residues 482–504 form a helical membrane-spanning segment; the sequence is EPGAFWGLIIGFLIGVSRMITEF. Over 505–525 the chain is Extracellular; it reads AYGTGSCMEPSNCPTIICGVH. The chain crosses the membrane as a helical span at residues 526–547; the sequence is YLYFAIILFVITIIVILAISLF. Residues 548-644 are Cytoplasmic-facing; it reads TKPIADVHLY…TSEKRLWRMV (97 aa). Residues 645–662 traverse the membrane as a helical segment; sequence VNINGIILLAVAVFCHAY. Topologically, residues 663-664 are extracellular; that stretch reads FA.

This sequence belongs to the sodium:solute symporter (SSF) (TC 2.A.21) family. In terms of processing, N-glycosylation is not necessary for the cotransporter function.

Its subcellular location is the apical cell membrane. The catalysed reaction is D-glucose(out) + 2 Na(+)(out) = D-glucose(in) + 2 Na(+)(in). The enzyme catalyses D-galactose(out) + 2 Na(+)(out) = D-galactose(in) + 2 Na(+)(in). With respect to regulation, enhanced by the interaction with PDZK1IP1/MAP17; but unlike SLC5A2/SGLT2, PDZK1IP1 is not essential for SLC5A1 transporter activity. Possibly modulated by cholesterol binding. In terms of biological role, electrogenic Na(+)-coupled sugar symporter that actively transports D-glucose or D-galactose at the plasma membrane, with a Na(+) to sugar coupling ratio of 2:1. Transporter activity is driven by a transmembrane Na(+) electrochemical gradient set by the Na(+)/K(+) pump. Has a primary role in the transport of dietary monosaccharides from enterocytes to blood. Responsible for the absorption of D-glucose or D-galactose across the apical brush-border membrane of enterocytes, whereas basolateral exit is provided by GLUT2. Additionally, functions as a D-glucose sensor in enteroendocrine cells, triggering the secretion of the incretins GCG and GIP that control food intake and energy homeostasis. Together with SGLT2, functions in reabsorption of D-glucose from glomerular filtrate, playing a nonredundant role in the S3 segment of the proximal tubules. Transports D-glucose into endometrial epithelial cells, controlling glycogen synthesis and nutritional support for the embryo as well as the decidual transformation of endometrium prior to conception. Acts as a water channel enabling passive water transport in response to the osmotic gradient created upon sugar and Na(+) uptake. Has high water conductivity comparable to aquaporins and therefore is expected to play an important role in transepithelial water permeability, especially in the small intestine. The protein is Sodium/glucose cotransporter 1 (SLC5A1) of Ovis aries (Sheep).